We begin with the raw amino-acid sequence, 473 residues long: Uronate isomerase (473 aa).

The protein belongs to the metallo-dependent hydrolases superfamily. Uronate isomerase family.

It catalyses the reaction D-glucuronate = D-fructuronate. The catalysed reaction is aldehydo-D-galacturonate = keto-D-tagaturonate. It participates in carbohydrate metabolism; pentose and glucuronate interconversion. The sequence is that of Uronate isomerase (uxaC) from Bacillus subtilis (strain 168).